Reading from the N-terminus, the 508-residue chain is MGLPWYRVHTVVLNDPGRLLSVHIMHTALVSGWAGSMALYELAVFDPSDPVLDPMWRQGMFVIPFMTRLGITNSWGGWSITGGTITNPGIWSYEGVAGAHIVFSGLCFLAAIWHWVYWDLEIFCDERTGKPSLDLPKIFGIHLFLSGVACFGFGAFHVTGLYGPGIWVSDPYGLTGKVQPISPSWGAEGFDPFVPGGIASHHIAAGTLGILAGLFHLSVRPPQRLYKALRMGNIETVLSSSIAAVFFAAFVVAGTMWYGSATTPIELFGPTRYQWDQGYFQQEIYRRVNAGLAENLSLSESWSKIPDKLAFYDYIGNNPAKGGLFRAGSMDNGDGIAVGWLGHPIFRDKEGHELFVRRMPTFFETFPVVLVDGDGIVRADVPFRRAESKYSVEQVGVTVEFYGGELDGVSYNDPATVKKYARRAQLGEIFELDRATLKSDGVFRSSPRGWFTFGHASFALLFFFGHIWHGARTLFRDVFAGIDPDLDAQVEFGTFQKLGDPTTRRQVV.

Transmembrane regions (helical) follow at residues 21-36 (SVHI…WAGS), 101-115 (IVFS…IWHW), 140-156 (GIHL…FGAF), 203-218 (IAAG…FHLS), 237-252 (VLSS…AFVV), and 457-472 (SFAL…HGAR).

This sequence belongs to the PsbB/PsbC family. PsbB subfamily. In terms of assembly, PSII is composed of 1 copy each of membrane proteins PsbA, PsbB, PsbC, PsbD, PsbE, PsbF, PsbH, PsbI, PsbJ, PsbK, PsbL, PsbM, PsbT, PsbX, PsbY, PsbZ, Psb30/Ycf12, at least 3 peripheral proteins of the oxygen-evolving complex and a large number of cofactors. It forms dimeric complexes. The cofactor is Binds multiple chlorophylls. PSII binds additional chlorophylls, carotenoids and specific lipids..

It localises to the plastid. The protein resides in the chloroplast thylakoid membrane. In terms of biological role, one of the components of the core complex of photosystem II (PSII). It binds chlorophyll and helps catalyze the primary light-induced photochemical processes of PSII. PSII is a light-driven water:plastoquinone oxidoreductase, using light energy to abstract electrons from H(2)O, generating O(2) and a proton gradient subsequently used for ATP formation. The protein is Photosystem II CP47 reaction center protein of Nuphar advena (Common spatterdock).